The chain runs to 200 residues: Molybdenum cofactor guanylyltransferase (200 aa).

Residues 15–17, Lys-28, Asp-74, and Asp-104 contribute to the GTP site; that span reads LAG. A Mg(2+)-binding site is contributed by Asp-104.

Belongs to the MobA family. In terms of assembly, monomer. It depends on Mg(2+) as a cofactor.

It localises to the cytoplasm. The catalysed reaction is Mo-molybdopterin + GTP + H(+) = Mo-molybdopterin guanine dinucleotide + diphosphate. In terms of biological role, transfers a GMP moiety from GTP to Mo-molybdopterin (Mo-MPT) cofactor (Moco or molybdenum cofactor) to form Mo-molybdopterin guanine dinucleotide (Mo-MGD) cofactor. The polypeptide is Molybdenum cofactor guanylyltransferase (Pseudomonas fluorescens (strain Pf0-1)).